The chain runs to 110 residues: uncharacterized protein (110 aa).

This is an uncharacterized protein from Archaeoglobus fulgidus (strain ATCC 49558 / DSM 4304 / JCM 9628 / NBRC 100126 / VC-16).